The following is a 515-amino-acid chain: Maturase K (515 aa).

This sequence belongs to the intron maturase 2 family. MatK subfamily.

It is found in the plastid. Its subcellular location is the chloroplast. Functionally, usually encoded in the trnK tRNA gene intron. Probably assists in splicing its own and other chloroplast group II introns. The sequence is that of Maturase K from Pinus clausa (Sand pine).